We begin with the raw amino-acid sequence, 485 residues long: Protein DETOXIFICATION 8 (485 aa).

Positions 1–26 (MENGFSLVPKEEEEEEDYSNEKSEDQ) are disordered. Helical transmembrane passes span 41 to 61 (FMAA…VISI), 74 to 94 (AVAI…FGLA), 118 to 138 (YGSM…WVFM), 159 to 179 (SIWL…TRFF), 188 to 208 (LFLS…LLVY), 212 to 232 (FGIV…VGLL), 263 to 283 (LAIP…LLIL), 297 to 317 (VLSI…AIGA), 338 to 358 (AANS…ISLY), 381 to 401 (ITPF…LSGV), 414 to 434 (ANIG…CFVV), and 442 to 462 (WIGI…VTFF).

This sequence belongs to the multi antimicrobial extrusion (MATE) (TC 2.A.66.1) family.

The protein localises to the membrane. The sequence is that of Protein DETOXIFICATION 8 from Arabidopsis thaliana (Mouse-ear cress).